The sequence spans 54 residues: ATP synthase F(0) complex subunit 8 (54 aa).

Residues 9 to 25 traverse the membrane as a helical segment; it reads WVFLFFLVWLVLGFLGL.

The protein belongs to the ATPase protein 8 family. As to quaternary structure, component of the ATP synthase complex composed at least of ATP5F1A/subunit alpha, ATP5F1B/subunit beta, ATP5MC1/subunit c (homooctomer), MT-ATP6/subunit a, MT-ATP8/subunit 8, ATP5ME/subunit e, ATP5MF/subunit f, ATP5MG/subunit g, ATP5MK/subunit k, ATP5MJ/subunit j, ATP5F1C/subunit gamma, ATP5F1D/subunit delta, ATP5F1E/subunit epsilon, ATP5PF/subunit F6, ATP5PB/subunit b, ATP5PD/subunit d, ATP5PO/subunit OSCP. ATP synthase complex consists of a soluble F(1) head domain (subunits alpha(3) and beta(3)) - the catalytic core - and a membrane F(0) domain - the membrane proton channel (subunits c, a, 8, e, f, g, k and j). These two domains are linked by a central stalk (subunits gamma, delta, and epsilon) rotating inside the F1 region and a stationary peripheral stalk (subunits F6, b, d, and OSCP).

Its subcellular location is the mitochondrion membrane. Its function is as follows. Subunit 8, of the mitochondrial membrane ATP synthase complex (F(1)F(0) ATP synthase or Complex V) that produces ATP from ADP in the presence of a proton gradient across the membrane which is generated by electron transport complexes of the respiratory chain. ATP synthase complex consist of a soluble F(1) head domain - the catalytic core - and a membrane F(1) domain - the membrane proton channel. These two domains are linked by a central stalk rotating inside the F(1) region and a stationary peripheral stalk. During catalysis, ATP synthesis in the catalytic domain of F(1) is coupled via a rotary mechanism of the central stalk subunits to proton translocation. In vivo, can only synthesize ATP although its ATP hydrolase activity can be activated artificially in vitro. Part of the complex F(0) domain. The chain is ATP synthase F(0) complex subunit 8 from Branchiostoma lanceolatum (Common lancelet).